The following is a 477-amino-acid chain: Ribulose bisphosphate carboxylase large chain (477 aa).

A propeptide spanning residues 1-2 (MS) is cleaved from the precursor. Pro3 is subject to N-acetylproline. Lys14 carries the post-translational modification N6,N6,N6-trimethyllysine. Residues Asn123 and Thr173 each coordinate substrate. Lys175 functions as the Proton acceptor in the catalytic mechanism. Position 177 (Lys177) interacts with substrate. Positions 201, 203, and 204 each coordinate Mg(2+). Lys201 is subject to N6-carboxylysine. His294 acts as the Proton acceptor in catalysis. Positions 295, 327, and 379 each coordinate substrate.

This sequence belongs to the RuBisCO large chain family. Type I subfamily. As to quaternary structure, heterohexadecamer of 8 large chains and 8 small chains; disulfide-linked. The disulfide link is formed within the large subunit homodimers. Mg(2+) is required as a cofactor. In terms of processing, the disulfide bond which can form in the large chain dimeric partners within the hexadecamer appears to be associated with oxidative stress and protein turnover.

The protein localises to the plastid. Its subcellular location is the chloroplast. The catalysed reaction is 2 (2R)-3-phosphoglycerate + 2 H(+) = D-ribulose 1,5-bisphosphate + CO2 + H2O. The enzyme catalyses D-ribulose 1,5-bisphosphate + O2 = 2-phosphoglycolate + (2R)-3-phosphoglycerate + 2 H(+). In terms of biological role, ruBisCO catalyzes two reactions: the carboxylation of D-ribulose 1,5-bisphosphate, the primary event in carbon dioxide fixation, as well as the oxidative fragmentation of the pentose substrate in the photorespiration process. Both reactions occur simultaneously and in competition at the same active site. This Persea americana (Avocado) protein is Ribulose bisphosphate carboxylase large chain.